The following is a 39-amino-acid chain: Adipokinetic prohormone type 2 (39 aa).

At glutamine 1 the chain carries Pyrrolidone carboxylic acid. The residue at position 8 (tryptophan 8) is a Tryptophan amide.

It belongs to the AKH/HRTH/RPCH family. As to quaternary structure, adipokinetic hormone precursor-related peptide (APRP) can form three type of disulfide-bond dimers: p1 (alpha-alpha), p2 (alpha-beta), and p3 (beta-beta).

It localises to the secreted. Functionally, this hormone, released from cells in the corpora cardiaca, causes release of diglycerides from the fat body and stimulation of muscles to use these diglycerides as an energy source during energy-demanding processes. In Schistocerca gregaria (Desert locust), this protein is Adipokinetic prohormone type 2.